The primary structure comprises 226 residues: MKMETFLVCLFHNADGLHQQIQEILYLLRMHIYETNLYLKQELSRLIYPNRQLSFVLLMPLSLLRNWDDIEYLTDVVDDKQTLHYAANLLTNYVLHLSMFQKLTKPYFLLAVKRVSEKLNKKQRHSFYEVLVTSETLNNYENLSKNILNTLMFAVRYVFKPTPNYSEILAELEKKNKIHHIIFNMVITDFAQIREQQMDKHLCETNNELRQECKETIFDLKVVGNV.

Positions 1–16 (MKMETFLVCLFHNADG) are cleaved as a signal peptide. Residues asparagine 142 and asparagine 164 are each glycosylated (N-linked (GlcNAc...) asparagine; by host).

The protein belongs to the asfivirus I226R family.

Plays a role in the inhibition of host NF-kappa-B and IRF3 signaling pathways. Mechanistically, promotes the degradation of host IKBKG through enhancing its ubiquitination leading to inhibition of both pathways. The sequence is that of Late protein I226R from African swine fever virus (isolate Tick/South Africa/Pretoriuskop Pr4/1996) (ASFV).